A 269-amino-acid polypeptide reads, in one-letter code: Proline-rich protein 7 (269 aa).

Residues 1–9 (MVMSQGTYT) are Extracellular-facing. The required for interaction with NMDA receptors stretch occupies residues 1–44 (MVMSQGTYTFLTCFAGFWLIWGLIVLLCCFCSFLRRRLKRRQEE). The segment at 2–39 (VMSQGTYTFLTCFAGFWLIWGLIVLLCCFCSFLRRRLK) is required for membrane localization. The chain crosses the membrane as a helical; Signal-anchor for type III membrane protein span at residues 10–30 (FLTCFAGFWLIWGLIVLLCCF). Over 31 to 269 (CSFLRRRLKR…IPLFGRTTAV (239 aa)) the chain is Cytoplasmic. Disordered regions lie at residues 63 to 83 (GSLAGSPPGLAPPPPPHRSRL) and 97 to 121 (PLLHHGPAPPHAHPHPHHHALPHPP). S64 is modified (phosphoserine). Over residues 108-117 (AHPHPHHHAL) the composition is skewed to basic residues. The tract at residues 146–166 (PCYEEAVLMAEPPPPYSEVLT) is required for internalization. The required for apoptosis induction stretch occupies residues 146 to 269 (PCYEEAVLMA…IPLFGRTTAV (124 aa)). The PDZ-binding motif lies at 267–269 (TAV).

In terms of assembly, forms a complex with NMDA receptor zeta subunit GRIN1 and epsilon subunit GRIN2B. Interacts with GRIN2B. Interacts with GRIN1; the interaction is reduced upon NMDA receptor activity. Found in a postsynaptic membrane complex with DLG4 and GRIN1. Interacts with DLG4 (via PDZ3 domain and to lesser degree via PDZ2 domain). Interacts with JUN. Found in a complex with JUN and FBXW7. Interacts with JUN and FBXW7; the interaction inhibits ubiquitination-mediated JUN degradation promoting its phosphorylation and transcriptional activity. Interacts with SRC. In terms of processing, palmitoylated. Post-translationally, tyrosine phosphorylated, possibly by SRC. As to expression, highly expressed in brain, moderately expressed in lymph nodes and T cells and low expression in thymus and spleen. Expressed in single positive progenitor thymocytes, particularly in CD8 single positive thymocytes.

The protein localises to the cell membrane. It localises to the postsynaptic cell membrane. The protein resides in the postsynaptic density membrane. It is found in the cytoplasm. Its subcellular location is the perinuclear region. The protein localises to the synapse. It localises to the cell projection. The protein resides in the dendrite. It is found in the nucleus. In terms of biological role, acts as a synapse-to-nucleus messenger to promote NMDA receptor-mediated excitotoxicity in neurons in a JUN-dependent manner. Inhibits ubiquitination-mediated degradation and promotes phosphorylation and transcriptional activity of transcription factor JUN. Might play a redundant role in the regulation of T cell receptor signaling. Might promote apoptosis in T cells. The chain is Proline-rich protein 7 (Prr7) from Mus musculus (Mouse).